A 277-amino-acid polypeptide reads, in one-letter code: 5-formyltetrahydrofolate cyclo-ligase, mitochondrial (277 aa).

A mitochondrion-targeting transit peptide spans 1–48 (MIGARVFCITTTALRRSPIFFFPKIPTRPVFRLSPATRPIVAMSTTSK). 60–64 (KRVVR) is a binding site for ATP. Substrate is bound by residues E113 and 207 to 211 (RGGGY). Residues 206–213 (GRGGGYYD) and D254 each bind ATP.

Belongs to the 5-formyltetrahydrofolate cyclo-ligase family. In terms of assembly, monomer.

It is found in the mitochondrion. The catalysed reaction is (6S)-5-formyl-5,6,7,8-tetrahydrofolate + ATP = (6R)-5,10-methenyltetrahydrofolate + ADP + phosphate. In terms of biological role, contributes to tetrahydrofolate metabolism and photorespiration through the regulation of serine hydroxymethyltransferase. Prefers the pentalutamyl to the monoglutamyl form of 5-formyltetrahydrofolate. The protein is 5-formyltetrahydrofolate cyclo-ligase, mitochondrial (5FCL) of Arabidopsis thaliana (Mouse-ear cress).